Here is a 260-residue protein sequence, read N- to C-terminus: Protein TONNEAU 1a (260 aa).

Positions 73 to 105 (SGRLLSALICEYLDWAQLNHTLIVYQPESNLPK) constitute a LisH domain. Disordered stretches follow at residues 147–224 (TQGM…EEVT) and 236–260 (DRKT…EGRD). Low complexity predominate over residues 161–175 (ESSSSLESRNPPRRS). Basic and acidic residues predominate over residues 248 to 260 (NVRDGTNEEEGRD).

In terms of assembly, interacts with CEN1, LNG1/TRM2 and LNG2/TRM1 (via C-terminus).

Its subcellular location is the cytoplasm. The protein localises to the cytoskeleton. In terms of biological role, involved in the control of the dynamic organization of the cortical cytoskeleton. May play a role in the organization of microtubule arrays at the centrosome through interaction with centrin 1 (CEN1). This chain is Protein TONNEAU 1a (TON1A), found in Arabidopsis thaliana (Mouse-ear cress).